The chain runs to 589 residues: ABC transporter G family member 8 (589 aa).

The ABC transporter domain occupies 16-261 (LTTSSISYTI…LLFKGFTVPP (246 aa)). 62 to 69 (GPSGAGKS) provides a ligand contact to ATP. The ABC transmembrane type-2 domain occupies 311–521 (TEISLLARRF…ALDALLINEY (211 aa)). The next 7 helical transmembrane spans lie at 335 to 355 (ALEA…IGIG), 365 to 385 (MFAF…PIFI), 412 to 432 (VFLP…YFLI), 441 to 461 (FGYF…FVLF), 470 to 490 (ITGT…SGYF), 499 to 519 (YWLF…LLIN), and 560 to 580 (FNVY…FLAL).

It belongs to the ABC transporter superfamily. ABCG family. Eye pigment precursor importer (TC 3.A.1.204) subfamily.

The protein localises to the membrane. The sequence is that of ABC transporter G family member 8 (ABCG8) from Arabidopsis thaliana (Mouse-ear cress).